We begin with the raw amino-acid sequence, 350 residues long: Holliday junction branch migration complex subunit RuvB (350 aa).

The large ATPase domain (RuvB-L) stretch occupies residues 1-182 (MEDRIVTPLN…FGVLCPMDFY (182 aa)). ATP contacts are provided by residues Leu21, Arg22, Gly63, Lys66, Thr67, Thr68, 129–131 (EDY), Arg172, Tyr182, and Arg219. Thr67 is a binding site for Mg(2+). Residues 183 to 253 (DQEELSEIVV…TSKAALELLE (71 aa)) are small ATPAse domain (RuvB-S). Positions 256-350 (KEGFDSIDNK…KQSSLFDGEV (95 aa)) are head domain (RuvB-H). Positions 311 and 316 each coordinate DNA.

Belongs to the RuvB family. As to quaternary structure, homohexamer. Forms an RuvA(8)-RuvB(12)-Holliday junction (HJ) complex. HJ DNA is sandwiched between 2 RuvA tetramers; dsDNA enters through RuvA and exits via RuvB. An RuvB hexamer assembles on each DNA strand where it exits the tetramer. Each RuvB hexamer is contacted by two RuvA subunits (via domain III) on 2 adjacent RuvB subunits; this complex drives branch migration. In the full resolvosome a probable DNA-RuvA(4)-RuvB(12)-RuvC(2) complex forms which resolves the HJ.

The protein resides in the cytoplasm. The enzyme catalyses ATP + H2O = ADP + phosphate + H(+). In terms of biological role, the RuvA-RuvB-RuvC complex processes Holliday junction (HJ) DNA during genetic recombination and DNA repair, while the RuvA-RuvB complex plays an important role in the rescue of blocked DNA replication forks via replication fork reversal (RFR). RuvA specifically binds to HJ cruciform DNA, conferring on it an open structure. The RuvB hexamer acts as an ATP-dependent pump, pulling dsDNA into and through the RuvAB complex. RuvB forms 2 homohexamers on either side of HJ DNA bound by 1 or 2 RuvA tetramers; 4 subunits per hexamer contact DNA at a time. Coordinated motions by a converter formed by DNA-disengaged RuvB subunits stimulates ATP hydrolysis and nucleotide exchange. Immobilization of the converter enables RuvB to convert the ATP-contained energy into a lever motion, pulling 2 nucleotides of DNA out of the RuvA tetramer per ATP hydrolyzed, thus driving DNA branch migration. The RuvB motors rotate together with the DNA substrate, which together with the progressing nucleotide cycle form the mechanistic basis for DNA recombination by continuous HJ branch migration. Branch migration allows RuvC to scan DNA until it finds its consensus sequence, where it cleaves and resolves cruciform DNA. This Clostridium kluyveri (strain NBRC 12016) protein is Holliday junction branch migration complex subunit RuvB.